A 500-amino-acid polypeptide reads, in one-letter code: NAD(P)H-quinone oxidoreductase chain 4, chloroplastic (500 aa).

Helical transmembrane passes span F4–F24, Y35–F55, I87–V107, L113–S130, L134–M154, F167–L187, A208–I228, H242–V262, A272–A292, I305–D325, G330–G350, L386–T406, I416–M436, and F463–F483.

This sequence belongs to the complex I subunit 4 family.

Its subcellular location is the plastid. It is found in the chloroplast thylakoid membrane. The enzyme catalyses a plastoquinone + NADH + (n+1) H(+)(in) = a plastoquinol + NAD(+) + n H(+)(out). It carries out the reaction a plastoquinone + NADPH + (n+1) H(+)(in) = a plastoquinol + NADP(+) + n H(+)(out). The sequence is that of NAD(P)H-quinone oxidoreductase chain 4, chloroplastic from Nandina domestica (Heavenly bamboo).